Reading from the N-terminus, the 427-residue chain is Serine hydroxymethyltransferase (427 aa).

Residues Leu122 and 126–128 (GHL) each bind (6S)-5,6,7,8-tetrahydrofolate. Lys231 carries the post-translational modification N6-(pyridoxal phosphate)lysine. (6S)-5,6,7,8-tetrahydrofolate-binding positions include Glu247 and 355 to 357 (SPF).

The protein belongs to the SHMT family. In terms of assembly, homodimer. It depends on pyridoxal 5'-phosphate as a cofactor.

Its subcellular location is the cytoplasm. It carries out the reaction (6R)-5,10-methylene-5,6,7,8-tetrahydrofolate + glycine + H2O = (6S)-5,6,7,8-tetrahydrofolate + L-serine. It functions in the pathway one-carbon metabolism; tetrahydrofolate interconversion. The protein operates within amino-acid biosynthesis; glycine biosynthesis; glycine from L-serine: step 1/1. Functionally, catalyzes the reversible interconversion of serine and glycine with tetrahydrofolate (THF) serving as the one-carbon carrier. This reaction serves as the major source of one-carbon groups required for the biosynthesis of purines, thymidylate, methionine, and other important biomolecules. Also exhibits THF-independent aldolase activity toward beta-hydroxyamino acids, producing glycine and aldehydes, via a retro-aldol mechanism. In Synechocystis sp. (strain ATCC 27184 / PCC 6803 / Kazusa), this protein is Serine hydroxymethyltransferase.